Here is a 281-residue protein sequence, read N- to C-terminus: Auxin-responsive protein IAA19 (281 aa).

The EAR-like (transcriptional repression) motif lies at 40-44; the sequence is LRLGL. Residues 66–126 form a disordered region; sequence LGPAPPPRGG…AAGAPRAAKA (61 aa). Residues 79–91 are compositionally biased toward basic and acidic residues; it reads GFVDSLDRSEGRR. Over residues 114 to 126 the composition is skewed to low complexity; sequence GEAAAGAPRAAKA. A PB1 domain is found at 161–265; the sequence is CCYVKVSMDG…RKLRIMRGSD (105 aa).

Belongs to the Aux/IAA family. Homodimers and heterodimers. As to expression, expressed in etiolated seedlings and flowers.

The protein resides in the nucleus. Aux/IAA proteins are short-lived transcriptional factors that function as repressors of early auxin response genes at low auxin concentrations. The polypeptide is Auxin-responsive protein IAA19 (IAA19) (Oryza sativa subsp. japonica (Rice)).